The following is a 386-amino-acid chain: Phosphoglycerate kinase (386 aa).

Residues 21–23 (DLN), R36, 59–62 (HLGR), R112, and R145 contribute to the substrate site. Residues K196, E313, and 339–342 (GGDT) contribute to the ATP site.

Belongs to the phosphoglycerate kinase family. As to quaternary structure, monomer.

Its subcellular location is the cytoplasm. The enzyme catalyses (2R)-3-phosphoglycerate + ATP = (2R)-3-phospho-glyceroyl phosphate + ADP. The protein operates within carbohydrate degradation; glycolysis; pyruvate from D-glyceraldehyde 3-phosphate: step 2/5. In Haemophilus influenzae (strain ATCC 51907 / DSM 11121 / KW20 / Rd), this protein is Phosphoglycerate kinase (pgk).